Consider the following 113-residue polypeptide: Venom protein 184 (113 aa).

The N-terminal stretch at 1–21 (MKTTLIFCILGIVIPTAVVSS) is a signal peptide.

Post-translationally, contains 3 disulfide bonds. As to expression, expressed by the venom gland.

It localises to the secreted. This is Venom protein 184 from Lychas mucronatus (Chinese swimming scorpion).